The sequence spans 882 residues: DNA mismatch repair protein MutS (882 aa).

The interval 1–22 is disordered; sequence MTLPSDFPLEPPATNKDPHRDY. 662 to 669 lines the ATP pocket; sequence GPNASGKS.

It belongs to the DNA mismatch repair MutS family.

Its function is as follows. This protein is involved in the repair of mismatches in DNA. It is possible that it carries out the mismatch recognition step. This protein has a weak ATPase activity. This is DNA mismatch repair protein MutS from Microcystis aeruginosa (strain NIES-843 / IAM M-2473).